The primary structure comprises 391 residues: uncharacterized protein (391 aa).

Belongs to the mycobacterial PPE family.

This is an uncharacterized protein from Mycobacterium tuberculosis (strain CDC 1551 / Oshkosh).